Consider the following 186-residue polypeptide: Large ribosomal subunit protein uL10 (186 aa).

The protein belongs to the universal ribosomal protein uL10 family. In terms of assembly, part of the ribosomal stalk of the 50S ribosomal subunit. The N-terminus interacts with L11 and the large rRNA to form the base of the stalk. The C-terminus forms an elongated spine to which L12 dimers bind in a sequential fashion forming a multimeric L10(L12)X complex.

Its function is as follows. Forms part of the ribosomal stalk, playing a central role in the interaction of the ribosome with GTP-bound translation factors. The sequence is that of Large ribosomal subunit protein uL10 from Roseiflexus sp. (strain RS-1).